A 516-amino-acid polypeptide reads, in one-letter code: NAD(P)H-quinone oxidoreductase chain 4, chloroplastic (516 aa).

A run of 14 helical transmembrane segments spans residues F4 to L24, L37 to L57, I87 to V107, A111 to S131, L134 to M154, F167 to L187, A208 to I228, H242 to V262, A272 to A292, I305 to D325, G330 to G350, L386 to T406, I416 to M436, and L462 to V482.

This sequence belongs to the complex I subunit 4 family.

The protein localises to the plastid. Its subcellular location is the chloroplast thylakoid membrane. It catalyses the reaction a plastoquinone + NADH + (n+1) H(+)(in) = a plastoquinol + NAD(+) + n H(+)(out). The enzyme catalyses a plastoquinone + NADPH + (n+1) H(+)(in) = a plastoquinol + NADP(+) + n H(+)(out). The sequence is that of NAD(P)H-quinone oxidoreductase chain 4, chloroplastic from Oenothera argillicola (Appalachian evening primrose).